Here is a 201-residue protein sequence, read N- to C-terminus: Phosphoheptose isomerase (201 aa).

Positions 36–195 (IAKSLNEGGK…EDILFEIPAA (160 aa)) constitute an SIS domain. 51–53 (NGG) provides a ligand contact to substrate. Positions 60 and 64 each coordinate Zn(2+). Residues glutamate 64, 93-94 (ND), 119-121 (STS), serine 124, and glutamine 171 contribute to the substrate site. Positions 171 and 179 each coordinate Zn(2+).

The protein belongs to the SIS family. GmhA subfamily. Zn(2+) is required as a cofactor.

It is found in the cytoplasm. It catalyses the reaction 2 D-sedoheptulose 7-phosphate = D-glycero-alpha-D-manno-heptose 7-phosphate + D-glycero-beta-D-manno-heptose 7-phosphate. Its pathway is carbohydrate biosynthesis; D-glycero-D-manno-heptose 7-phosphate biosynthesis; D-glycero-alpha-D-manno-heptose 7-phosphate and D-glycero-beta-D-manno-heptose 7-phosphate from sedoheptulose 7-phosphate: step 1/1. Functionally, catalyzes the isomerization of sedoheptulose 7-phosphate in D-glycero-D-manno-heptose 7-phosphate. This chain is Phosphoheptose isomerase, found in Thermodesulfovibrio yellowstonii (strain ATCC 51303 / DSM 11347 / YP87).